Reading from the N-terminus, the 383-residue chain is 8-amino-7-oxononanoate synthase (383 aa).

Arg21 serves as a coordination point for substrate. Residue 108–109 (GF) participates in pyridoxal 5'-phosphate binding. Residue His133 coordinates substrate. Pyridoxal 5'-phosphate contacts are provided by Ser179, His207, and Thr233. Lys236 is modified (N6-(pyridoxal phosphate)lysine). Thr350 provides a ligand contact to substrate.

This sequence belongs to the class-II pyridoxal-phosphate-dependent aminotransferase family. BioF subfamily. Homodimer. The cofactor is pyridoxal 5'-phosphate.

It catalyses the reaction 6-carboxyhexanoyl-[ACP] + L-alanine + H(+) = (8S)-8-amino-7-oxononanoate + holo-[ACP] + CO2. The protein operates within cofactor biosynthesis; biotin biosynthesis. In terms of biological role, catalyzes the decarboxylative condensation of pimeloyl-[acyl-carrier protein] and L-alanine to produce 8-amino-7-oxononanoate (AON), [acyl-carrier protein], and carbon dioxide. This is 8-amino-7-oxononanoate synthase from Yersinia enterocolitica serotype O:8 / biotype 1B (strain NCTC 13174 / 8081).